Reading from the N-terminus, the 414-residue chain is Arrestin domain-containing protein 3 (414 aa).

2 consecutive short sequence motifs (PPxY motif) follow at residues 346 to 349 (PPSY) and 391 to 394 (PPLY). The tract at residues 393–414 (LYSEIDPNPDQPADDRPSCPSR) is disordered. The span at 405–414 (ADDRPSCPSR) shows a compositional bias: basic and acidic residues.

Belongs to the arrestin family. As to quaternary structure, interacts (via PPxY motifs) with NEDD4 (via WW domains). Interacts with ADRB2. Interacts with ADRB3. Interacts with HGS (via PPxY motifs). Does not bind TXN (thioredoxin). Interacts with ITCH.

The protein resides in the cytoplasm. The protein localises to the cell membrane. It is found in the lysosome. Its subcellular location is the endosome. It localises to the early endosome. In terms of biological role, adapter protein that plays a role in regulating cell-surface expression of adrenergic receptors and probably also other G protein-coupled receptors. Plays a role in NEDD4-mediated ubiquitination and endocytosis af activated ADRB2 and subsequent ADRB2 degradation. May recruit NEDD4 to ADRB2. Alternatively, may function as adapter protein that does not play a major role in recruiting NEDD4 to ADRB2, but rather plays a role in a targeting ADRB2 to endosomes. This is Arrestin domain-containing protein 3 (ARRDC3) from Bos taurus (Bovine).